The primary structure comprises 340 residues: Heat-inducible transcription repressor HrcA (340 aa).

It belongs to the HrcA family.

Functionally, negative regulator of class I heat shock genes (grpE-dnaK-dnaJ and groELS operons). Prevents heat-shock induction of these operons. The chain is Heat-inducible transcription repressor HrcA from Mycoplasma mycoides subsp. mycoides SC (strain CCUG 32753 / NCTC 10114 / PG1).